A 219-amino-acid chain; its full sequence is HTH-type transcriptional regulator LutR (219 aa).

The 56-residue stretch at 1 to 56 (MIKNGELKPGDKLDSVQALAESFQVSRSAVREALSALKAMGLVEMKQGEGTYLKEF) folds into the HTH gntR-type domain. The H-T-H motif DNA-binding region spans 16–35 (VQALAESFQVSRSAVREALS).

In terms of biological role, negatively regulates the transcription of the lutABC operon, which is required for L-lactate utilization. LutR activity is regulated by lactate, since presence of L-lactate, that probably binds to LutR, leads to derepression of the operon. Also appears to be essential for bacilysin biosynthesis. The polypeptide is HTH-type transcriptional regulator LutR (lutR) (Bacillus subtilis (strain 168)).